Here is a 434-residue protein sequence, read N- to C-terminus: Serine/threonine-protein kinase Sgk1-B (434 aa).

A disordered region spans residues glutamate 68–proline 94. Positions phenylalanine 101–phenylalanine 358 constitute a Protein kinase domain. ATP contacts are provided by residues isoleucine 107–valine 115 and lysine 130. Aspartate 225 serves as the catalytic Proton acceptor. One can recognise an AGC-kinase C-terminal domain in the interval serine 359 to leucine 434.

The protein belongs to the protein kinase superfamily. AGC Ser/Thr protein kinase family.

It localises to the cytoplasm. The protein localises to the nucleus. Its subcellular location is the endoplasmic reticulum. The catalysed reaction is L-seryl-[protein] + ATP = O-phospho-L-seryl-[protein] + ADP + H(+). The enzyme catalyses L-threonyl-[protein] + ATP = O-phospho-L-threonyl-[protein] + ADP + H(+). Protein kinase that may play an important role in cellular stress response. Plays an important role in activating certain potassium, sodium, and chloride channels, suggesting an involvement in the regulation of processes such as cell survival, neuronal excitability and renal sodium excretion. In Xenopus laevis (African clawed frog), this protein is Serine/threonine-protein kinase Sgk1-B (sgk1-b).